Consider the following 380-residue polypeptide: Homoserine O-acetyltransferase (380 aa).

An AB hydrolase-1 domain is found at 70–366 (NAVLVFHALT…SPHGHDAFLI (297 aa)). The active-site Nucleophile is the serine 186. Position 250 (arginine 250) interacts with substrate. Catalysis depends on residues aspartate 333 and histidine 361. Aspartate 362 provides a ligand contact to substrate.

It belongs to the AB hydrolase superfamily. MetX family. In terms of assembly, homodimer.

It is found in the cytoplasm. The enzyme catalyses L-homoserine + acetyl-CoA = O-acetyl-L-homoserine + CoA. It functions in the pathway amino-acid biosynthesis; L-methionine biosynthesis via de novo pathway; O-acetyl-L-homoserine from L-homoserine: step 1/1. Functionally, transfers an acetyl group from acetyl-CoA to L-homoserine, forming acetyl-L-homoserine. The sequence is that of Homoserine O-acetyltransferase from Thermus thermophilus (strain ATCC BAA-163 / DSM 7039 / HB27).